Reading from the N-terminus, the 325-residue chain is ATP phosphoribosyltransferase (325 aa).

Belongs to the ATP phosphoribosyltransferase family. Long subfamily. Requires Mg(2+) as cofactor.

It is found in the cytoplasm. It carries out the reaction 1-(5-phospho-beta-D-ribosyl)-ATP + diphosphate = 5-phospho-alpha-D-ribose 1-diphosphate + ATP. The protein operates within amino-acid biosynthesis; L-histidine biosynthesis; L-histidine from 5-phospho-alpha-D-ribose 1-diphosphate: step 1/9. Feedback inhibited by histidine. Catalyzes the condensation of ATP and 5-phosphoribose 1-diphosphate to form N'-(5'-phosphoribosyl)-ATP (PR-ATP). Has a crucial role in the pathway because the rate of histidine biosynthesis seems to be controlled primarily by regulation of HisG enzymatic activity. The protein is ATP phosphoribosyltransferase of Rhodopseudomonas palustris (strain BisB18).